The primary structure comprises 397 residues: Purine ribonucleoside efflux pump NepI (397 aa).

The Cytoplasmic segment spans residues 1–21; sequence MNENIAEKFRADGVARPNWSA. A helical membrane pass occupies residues 22–42; sequence VFAVAFCVACLITVEFLPVSL. Topologically, residues 43–54 are periplasmic; that stretch reads LTPMAQDLGISE. A helical transmembrane segment spans residues 55–75; sequence GVAGQSVTVTAFVAMFSSLFI. At 76–85 the chain is on the cytoplasmic side; the sequence is TQIIQATDRR. Residues 86 to 106 traverse the membrane as a helical segment; it reads YIVILFAVLLTASCLMVSFAN. A topological domain (periplasmic) is located at residue serine 107. The helical transmembrane segment at 108–128 threads the bilayer; sequence FTLLLLGRACLGLALGGFWAM. The Cytoplasmic portion of the chain corresponds to 129–147; that stretch reads SASLTMRLVPARTVPKALS. A helical transmembrane segment spans residues 148-168; that stretch reads VIFGAVSIALVIAAPLGSFLG. The Periplasmic segment spans residues 169 to 175; it reads GIIGWRN. Residues 176 to 196 traverse the membrane as a helical segment; it reads VFNAAAVMGVLCVIWVVKSLP. The Cytoplasmic portion of the chain corresponds to 197–215; the sequence is SLPGEPSHQKQNMFSLLQR. Residues 216-236 traverse the membrane as a helical segment; sequence PGVMAGMIAIFMSFAGQFAFF. Residues 237 to 255 lie on the Periplasmic side of the membrane; the sequence is TYIRPVYMNLAGFDVDGLT. Residues 256–276 form a helical membrane-spanning segment; it reads LVLLSFGIASFVGTSFSSYVL. At 277-281 the chain is on the cytoplasmic side; that stretch reads KRSVK. Residues 282–302 form a helical membrane-spanning segment; it reads LALAGAPLLLALSALTLIVWG. At 303–305 the chain is on the periplasmic side; it reads SDK. Residues 306-326 traverse the membrane as a helical segment; the sequence is TVAAAIAIIWGLAFALVPVGW. At 327 to 343 the chain is on the cytoplasmic side; sequence STWITRSLADQAEKAGS. Residues 344–364 form a helical membrane-spanning segment; the sequence is IQVAVIQLANTCGAAVGGYAL. Topologically, residues 365–366 are periplasmic; that stretch reads DN. Residues 367-387 traverse the membrane as a helical segment; sequence FGLLSPLALSGGLMLLTALVV. The Cytoplasmic portion of the chain corresponds to 388 to 397; the sequence is AAKVRITPMS.

The protein belongs to the major facilitator superfamily. DHA1 family. NepI (TC 2.A.1.2.26) subfamily.

Its subcellular location is the cell inner membrane. It catalyses the reaction inosine(in) + H(+)(out) = inosine(out) + H(+)(in). The catalysed reaction is guanosine(in) + H(+)(out) = guanosine(out) + H(+)(in). Its function is as follows. Involved in the efflux of purine ribonucleosides, such as inosine and guanosine. The protein is Purine ribonucleoside efflux pump NepI of Salmonella choleraesuis (strain SC-B67).